The chain runs to 1437 residues: Protein CC2D2B (1437 aa).

The protein is Protein CC2D2B of Homo sapiens (Human).